We begin with the raw amino-acid sequence, 173 residues long: Crossover junction endodeoxyribonuclease RuvC (173 aa).

Residues D8, E68, and D140 contribute to the active site. Positions 8, 68, and 140 each coordinate Mg(2+).

This sequence belongs to the RuvC family. As to quaternary structure, homodimer which binds Holliday junction (HJ) DNA. The HJ becomes 2-fold symmetrical on binding to RuvC with unstacked arms; it has a different conformation from HJ DNA in complex with RuvA. In the full resolvosome a probable DNA-RuvA(4)-RuvB(12)-RuvC(2) complex forms which resolves the HJ. The cofactor is Mg(2+).

The protein resides in the cytoplasm. It catalyses the reaction Endonucleolytic cleavage at a junction such as a reciprocal single-stranded crossover between two homologous DNA duplexes (Holliday junction).. In terms of biological role, the RuvA-RuvB-RuvC complex processes Holliday junction (HJ) DNA during genetic recombination and DNA repair. Endonuclease that resolves HJ intermediates. Cleaves cruciform DNA by making single-stranded nicks across the HJ at symmetrical positions within the homologous arms, yielding a 5'-phosphate and a 3'-hydroxyl group; requires a central core of homology in the junction. The consensus cleavage sequence is 5'-(A/T)TT(C/G)-3'. Cleavage occurs on the 3'-side of the TT dinucleotide at the point of strand exchange. HJ branch migration catalyzed by RuvA-RuvB allows RuvC to scan DNA until it finds its consensus sequence, where it cleaves and resolves the cruciform DNA. The sequence is that of Crossover junction endodeoxyribonuclease RuvC from Saccharophagus degradans (strain 2-40 / ATCC 43961 / DSM 17024).